Reading from the N-terminus, the 508-residue chain is Photosystem II CP47 reaction center protein (508 aa).

The next 6 helical transmembrane spans lie at 21–36 (SVHI…WAGS), 101–115 (IVFS…IWHW), 140–156 (GIHL…FGAF), 203–218 (IAAG…FHLS), 237–252 (VLSS…AFVV), and 457–472 (SFAL…HGAR).

This sequence belongs to the PsbB/PsbC family. PsbB subfamily. As to quaternary structure, PSII is composed of 1 copy each of membrane proteins PsbA, PsbB, PsbC, PsbD, PsbE, PsbF, PsbH, PsbI, PsbJ, PsbK, PsbL, PsbM, PsbT, PsbX, PsbY, PsbZ, Psb30/Ycf12, at least 3 peripheral proteins of the oxygen-evolving complex and a large number of cofactors. It forms dimeric complexes. Binds multiple chlorophylls. PSII binds additional chlorophylls, carotenoids and specific lipids. is required as a cofactor.

It is found in the plastid. The protein localises to the chloroplast thylakoid membrane. Functionally, one of the components of the core complex of photosystem II (PSII). It binds chlorophyll and helps catalyze the primary light-induced photochemical processes of PSII. PSII is a light-driven water:plastoquinone oxidoreductase, using light energy to abstract electrons from H(2)O, generating O(2) and a proton gradient subsequently used for ATP formation. This chain is Photosystem II CP47 reaction center protein, found in Dioscorea elephantipes (Elephant's foot yam).